A 103-amino-acid chain; its full sequence is U6 snRNA-associated Sm-like protein LSm7 (103 aa).

Ala-2 is modified (N-acetylalanine). A Sm domain is found at Glu-10 to Met-90.

It belongs to the snRNP Sm proteins family. Component of the precatalytic spliceosome (spliceosome B complex). Component of the U4/U6-U5 tri-snRNP complex, a building block of the precatalytic spliceosome (spliceosome B complex). The U4/U6-U5 tri-snRNP complex is composed of the U4, U6 and U5 snRNAs and at least PRPF3, PRPF4, PRPF6, PRPF8, PRPF31, SNRNP200, TXNL4A, SNRNP40, SNRPB, SNRPD1, SNRPD2, SNRPD3, SNRPE, SNRPF, SNRPG, DDX23, CD2BP2, PPIH, SNU13, EFTUD2, SART1 and USP39, plus LSM2, LSM3, LSM4, LSM5, LSM6, LSM7 and LSM8. LSM2, LSM3, LSM4, LSM5, LSM6, LSM7 and LSM8 form a heptameric, ring-shaped subcomplex (the LSM2-8 complex) that is part of the U4/U6-U5 tri-snRNP complex and the precatalytic spliceosome. Interacts with TACC1.

The protein localises to the nucleus. Functionally, plays a role in pre-mRNA splicing as component of the U4/U6-U5 tri-snRNP complex that is involved in spliceosome assembly, and as component of the precatalytic spliceosome (spliceosome B complex). The heptameric LSM2-8 complex binds specifically to the 3'-terminal U-tract of U6 snRNA. The polypeptide is U6 snRNA-associated Sm-like protein LSm7 (Lsm7) (Mus musculus (Mouse)).